The following is a 182-amino-acid chain: NADH-quinone oxidoreductase subunit I (182 aa).

4Fe-4S ferredoxin-type domains lie at 52–82 (LTRD…LQKA) and 92–121 (EFFR…LTPD). Positions 62, 65, 68, 72, 101, 104, 107, and 111 each coordinate [4Fe-4S] cluster.

It belongs to the complex I 23 kDa subunit family. In terms of assembly, NDH-1 is composed of 13 different subunits. Subunits NuoA, H, J, K, L, M, N constitute the membrane sector of the complex. [4Fe-4S] cluster is required as a cofactor.

It localises to the cell inner membrane. It catalyses the reaction a quinone + NADH + 5 H(+)(in) = a quinol + NAD(+) + 4 H(+)(out). Its function is as follows. NDH-1 shuttles electrons from NADH, via FMN and iron-sulfur (Fe-S) centers, to quinones in the respiratory chain. The immediate electron acceptor for the enzyme in this species is believed to be ubiquinone. Couples the redox reaction to proton translocation (for every two electrons transferred, four hydrogen ions are translocated across the cytoplasmic membrane), and thus conserves the redox energy in a proton gradient. The sequence is that of NADH-quinone oxidoreductase subunit I from Pseudomonas aeruginosa (strain LESB58).